The primary structure comprises 688 residues: SRSF protein kinase 2 (688 aa).

Residues 1–65 are disordered; the sequence is MSVNSEKSSS…EQEDPADYCK (65 aa). Pro residues predominate over residues 22–43; the sequence is LVPPPPPPPPPPPPPLPDPTPP. Over residues 44 to 61 the composition is skewed to acidic residues; it reads EPEEEILGSDDEEQEDPA. The residue at position 52 (Ser-52) is a Phosphoserine. Positions 81–684 constitute a Protein kinase domain; sequence YHVIRKLGWG…ASAGECLRHP (604 aa). Residues 87–95 and Lys-110 each bind ATP; that span reads LGWGHFSTV. Catalysis depends on Asp-214, which acts as the Proton acceptor. Disordered stretches follow at residues 239-277, 329-444, and 469-501; these read WQKA…KKQK, GLEE…GRHK, and SVLS…TGDL. Positions 265–277 are enriched in basic residues; it reads SKNKKKKLKKKQK. A Phosphoserine modification is found at Ser-380. Acidic residues predominate over residues 397 to 421; that stretch reads QLDDEDDDEEDCPNPEEYNLDEPNA. Polar residues predominate over residues 423–433; that stretch reads SDYTYSSSYEQ. A Phosphoserine modification is found at Ser-475. Position 478 is a phosphothreonine (Thr-478). Phosphoserine is present on residues Ser-484, Ser-486, and Ser-490. Residue Thr-492 is modified to Phosphothreonine; by PKB/AKT1. Phosphoserine occurs at positions 494 and 497. Ser-588 bears the Phosphoserine; by CK2 mark.

This sequence belongs to the protein kinase superfamily. CMGC Ser/Thr protein kinase family. As to quaternary structure, associates with U4/U6-U5 tri-small nuclear ribonucleoproteins (U4/U6-U5 tri-snRNPs). Interacts with PKB/AKT1 in a phosphorylation-dependent manner. The phosphorylated form (by PKB/AKT1) interacts with YWHAB and YWHAE. Interaction with YWHAB suppresses its cleavage by caspases and inhibits the release of its N-terminal pro-apoptotic fragment. Interacts with SFN. Interacts with ACIN1. Interacts with POLR2A/RNA polymerase II; the interaction occurs during the co-transcriptional formation of inappropriate R-loops. Mg(2+) serves as cofactor. Post-translationally, phosphorylation at Thr-492 by PKB/AKT1 enhances its stimulatory activity in triggering cyclin-D1 (CCND1) expression and promoting apoptosis in neurons, which can be blocked by YWHAB. It also enhances its protein kinase activity toward ACIN1 and SRSF2, promotes its nuclear translocation and prevents its proteolytic cleavage. In terms of processing, proteolytically cleaved at Asp-139 and Asp-403 by caspase-3 during apoptotic cell death. Cleavage at Asp-139 which is the major site of cleavage, produces a small N-terminal fragment that translocates into nucleus and promotes VP16-induced apoptosis. As to expression, highly expressed in brain, moderately expressed in heart and skeletal muscle and at low levels in lung, liver, and kidney.

It localises to the cytoplasm. The protein localises to the nucleus. Its subcellular location is the nucleoplasm. The protein resides in the nucleus speckle. It is found in the chromosome. It catalyses the reaction L-seryl-[protein] + ATP = O-phospho-L-seryl-[protein] + ADP + H(+). It carries out the reaction L-threonyl-[protein] + ATP = O-phospho-L-threonyl-[protein] + ADP + H(+). Its activity is regulated as follows. Activated by phosphorylation on Ser-52 and Ser-588. Serine/arginine-rich protein-specific kinase which specifically phosphorylates its substrates at serine residues located in regions rich in arginine/serine dipeptides, known as RS domains and is involved in the phosphorylation of SR splicing factors and the regulation of splicing. Promotes neuronal apoptosis by up-regulating cyclin-D1 (CCND1) expression. This is done by the phosphorylation of SRSF2, leading to the suppression of p53/TP53 phosphorylation thereby relieving the repressive effect of p53/TP53 on cyclin-D1 (CCND1) expression. Phosphorylates ACIN1, and redistributes it from the nuclear speckles to the nucleoplasm, resulting in cyclin A1 but not cyclin A2 up-regulation. Plays an essential role in spliceosomal B complex formation via the phosphorylation of DDX23/PRP28. Probably by phosphorylating DDX23, leads to the suppression of incorrect R-loops formed during transcription; R-loops are composed of a DNA:RNA hybrid and the associated non-template single-stranded DNA. Can mediate hepatitis B virus (HBV) core protein phosphorylation. Plays a negative role in the regulation of HBV replication through a mechanism not involving the phosphorylation of the core protein but by reducing the packaging efficiency of the pregenomic RNA (pgRNA) without affecting the formation of the viral core particles. The sequence is that of SRSF protein kinase 2 from Homo sapiens (Human).